We begin with the raw amino-acid sequence, 955 residues long: Glycine dehydrogenase (decarboxylating) (955 aa).

Lysine 705 is modified (N6-(pyridoxal phosphate)lysine).

It belongs to the GcvP family. As to quaternary structure, the glycine cleavage system is composed of four proteins: P, T, L and H. Requires pyridoxal 5'-phosphate as cofactor.

The catalysed reaction is N(6)-[(R)-lipoyl]-L-lysyl-[glycine-cleavage complex H protein] + glycine + H(+) = N(6)-[(R)-S(8)-aminomethyldihydrolipoyl]-L-lysyl-[glycine-cleavage complex H protein] + CO2. Functionally, the glycine cleavage system catalyzes the degradation of glycine. The P protein binds the alpha-amino group of glycine through its pyridoxal phosphate cofactor; CO(2) is released and the remaining methylamine moiety is then transferred to the lipoamide cofactor of the H protein. This is Glycine dehydrogenase (decarboxylating) from Aliivibrio salmonicida (strain LFI1238) (Vibrio salmonicida (strain LFI1238)).